A 354-amino-acid polypeptide reads, in one-letter code: Opsin-1, short-wave-sensitive 2 (354 aa).

Over 1 to 43 (MKQQQQTPELFEDFHMPITLDVSNISAYSPFLVPQDHLGHSGV) the chain is Extracellular. Asn-24 carries an N-linked (GlcNAc...) asparagine glycan. The chain crosses the membrane as a helical span at residues 44–68 (FMGMSAFMLFLFIAGTAINVLTIVC). Residues 69 to 80 (TIQYKKLRSHLN) are Cytoplasmic-facing. Residues 81 to 106 (YILVNLAISNLWVSVFGSSVAFYAFY) traverse the membrane as a helical segment. The Extracellular portion of the chain corresponds to 107-120 (KKYFVFGPIGCKIE). Cys-117 and Cys-194 form a disulfide bridge. The helical transmembrane segment at 121-140 (GFTSTIGGMVSLWSLAVVAL) threads the bilayer. At 141-159 (ERWLVICKPLGNFTFKTPH) the chain is on the cytoplasmic side. A helical membrane pass occupies residues 160–183 (AIAGCILPWCMALAAGLPPLLGWS). The Extracellular portion of the chain corresponds to 184–209 (RYIPEGLQCSCGPDWYTTNNKFNNES). N-linked (GlcNAc...) asparagine glycosylation is present at Asn-207. The helical transmembrane segment at 210–237 (YVMFLFCFCFAVPFSTIVFCYGQLLITL) threads the bilayer. Topologically, residues 238-259 (KLAAKAQADSASTQKAEREVTK) are cytoplasmic. The chain crosses the membrane as a helical span at residues 260-283 (MVVVMVFGFLICWGPYAIFAIWVV). Topologically, residues 284–291 (SNRGAPFD) are extracellular. A helical transmembrane segment spans residues 292 to 316 (LRLATIPSCLCKASTVYNPVIYVLM). The residue at position 303 (Lys-303) is an N6-(retinylidene)lysine. Residues 317 to 354 (NKQFRSCMMKMVFNKNIEEDEASSSSQVTQVSSVAPEK) lie on the Cytoplasmic side of the membrane.

The protein belongs to the G-protein coupled receptor 1 family. Opsin subfamily. Post-translationally, phosphorylated on some or all of the serine and threonine residues present in the C-terminal region. Retinal long single cone outer segments.

Its subcellular location is the membrane. Functionally, visual pigments are the light-absorbing molecules that mediate vision. They consist of an apoprotein, opsin, covalently linked to cis-retinal. In Danio rerio (Zebrafish), this protein is Opsin-1, short-wave-sensitive 2 (opn1sw2).